The primary structure comprises 552 residues: uncharacterized protein (552 aa).

Glycine 29 to serine 36 serves as a coordination point for ATP. Residues arginine 379–proline 469 form the Toprim domain.

This is an uncharacterized protein from Escherichia coli (strain K12).